We begin with the raw amino-acid sequence, 405 residues long: Low-salt glycan biosynthesis sulfotransferase Agl7 (405 aa).

Ca(2+) contacts are provided by Asp24, Asp201, and His202.

This sequence belongs to the sulfatase family. Ca(2+) serves as cofactor.

Its pathway is protein modification; protein glycosylation. The protein operates within cell surface structure biogenesis; S-layer biogenesis. Its function is as follows. Involved in N-glycan biosynthetic pathway that takes place under low-salt conditions (1.75 M instead of 3.4 M). Participates in the formation of the tetrasaccharide present at 'Asn-532' of S-layer glycoprotein Csg, consisting of a sulfated hexose, 2 hexoses and rhamnose. Mediates sulfation of sugar 1 in the tetrasaccharide. This chain is Low-salt glycan biosynthesis sulfotransferase Agl7, found in Haloferax volcanii (strain ATCC 29605 / DSM 3757 / JCM 8879 / NBRC 14742 / NCIMB 2012 / VKM B-1768 / DS2) (Halobacterium volcanii).